The primary structure comprises 1063 residues: Unconventional myosin-Ic (1063 aa).

Position 1 is an N-acetylmethionine (methionine 1). Positions 47–731 (GVQDFVLLEN…TLFATEDALE (685 aa)) constitute a Myosin motor domain. Residues asparagine 88, tyrosine 96, 139 to 148 (SGESGAGKTE), and 192 to 196 (NDNSS) each bind ATP. An N6-methyllysine modification is found at lysine 383. Serine 408 is modified (phosphoserine). An N6-acetyllysine modification is found at lysine 486. A Phosphoserine modification is found at serine 536. The interval 608–630 (LLELVEILKSKEPAYVRCIKPND) is actin-binding. IQ domains follow at residues 734 to 757 (RQSLATKIQATWRGFHCRQKFLRV) and 758 to 786 (KRSAICIQSWWRGTLGRRKAAKRKWAAQT). 2 positions are modified to phosphoserine: serine 864 and serine 1041. Residues 885 to 1059 (KDNYPQSVPR…NGHLAVVAPR (175 aa)) enclose the TH1 domain.

Belongs to the TRAFAC class myosin-kinesin ATPase superfamily. Myosin family. Interacts (via its IQ motifs) with CABP1 and CIB1; the interaction with CABP1 and CIB1 is calcium-dependent. Interacts (via tail domain) with PLEKHB1 (via PH domain); the interaction is not affected by the presence or absence of calcium and CALM. Interacts with POLR1A. Interacts with POLR2A. Component of the B-WICH complex, at least composed of SMARCA5/SNF2H, BAZ1B/WSTF, SF3B1, DEK, MYO1C, ERCC6, MYBBP1A and DDX21. Interacts (via its IQ motifs) with CALM; this precludes interaction with YWHAB. Interacts with YWHAB; this precludes interaction with CALM. Interacts with RPS6. Interacts with actin. Interacts with LLPH. Interacts with GLUT4. Interacts (via its IQ motifs) with SH3BGRL3; the interaction is dependent on calcium and takes place at membrane ruffles. Isoform 2 contains a N-acetylmethionine at position 1. As to expression, widely expressed.

Its subcellular location is the cytoplasm. It is found in the nucleus. The protein resides in the cell cortex. The protein localises to the cell projection. It localises to the ruffle membrane. Its subcellular location is the cytoplasmic vesicle. It is found in the stereocilium membrane. The protein resides in the nucleolus. The protein localises to the nucleoplasm. Myosins are actin-based motor molecules with ATPase activity. Unconventional myosins serve in intracellular movements. Their highly divergent tails are presumed to bind to membranous compartments, which would be moved relative to actin filaments. Involved in glucose transporter recycling in response to insulin by regulating movement of intracellular GLUT4-containing vesicles to the plasma membrane. Component of the hair cell's (the sensory cells of the inner ear) adaptation-motor complex. Acts as a mediator of adaptation of mechanoelectrical transduction in stereocilia of vestibular hair cells. Binds phosphoinositides and links the actin cytoskeleton to cellular membranes. Its function is as follows. Isoform 3 is involved in regulation of transcription. Associated with transcriptional active ribosomal genes. Appears to cooperate with the WICH chromatin-remodeling complex to facilitate transcription. Necessary for the formation of the first phosphodiester bond during transcription initiation. This Bos taurus (Bovine) protein is Unconventional myosin-Ic (MYO1C).